The chain runs to 378 residues: Phosphatidyl-myo-inositol mannosyltransferase (378 aa).

The GDP-alpha-D-mannose site is built by Tyr-9 and Gly-16. Residues Gln-18, 62 to 63, and Arg-68 each bind a 1,2-diacyl-sn-glycero-3-phospho-(1D-myo-inositol); that span reads YN. GDP-alpha-D-mannose contacts are provided by residues Arg-196, 201-202, 251-253, Lys-256, 274-278, and Glu-282; these read RK, VDD, and ESFGI.

The protein belongs to the glycosyltransferase group 1 family. Monomer. Mg(2+) is required as a cofactor.

It is found in the cell membrane. It carries out the reaction a 1,2-diacyl-sn-glycero-3-phospho-(1D-myo-inositol) + GDP-alpha-D-mannose = a 1,2-diacyl-sn-glycero-3-phospho-[alpha-D-mannopyranosyl-(1&lt;-&gt;6)-D-myo-inositol] + GDP + H(+). It participates in phospholipid metabolism; phosphatidylinositol metabolism. Its function is as follows. Involved in the biosynthesis of phosphatidyl-myo-inositol mannosides (PIM) which are early precursors in the biosynthesis of lipomannans (LM) and lipoarabinomannans (LAM). Catalyzes the addition of a mannosyl residue from GDP-D-mannose (GDP-Man) to the position 2 of the carrier lipid phosphatidyl-myo-inositol (PI) to generate a phosphatidyl-myo-inositol bearing an alpha-1,2-linked mannose residue (PIM1). The polypeptide is Phosphatidyl-myo-inositol mannosyltransferase (Mycobacterium bovis (strain ATCC BAA-935 / AF2122/97)).